Here is a 209-residue protein sequence, read N- to C-terminus: Probable calcium-binding protein CML36 (209 aa).

Positions 22–59 (SKSPTAFSFGSASSSSGQDCKNSGGDGGGGSVTPTSIL) are disordered. The span at 27–38 (AFSFGSASSSSG) shows a compositional bias: low complexity. EF-hand domains follow at residues 66–101 (YSYV…LGPD), 103–138 (LTEE…LDPA), 139–174 (RDST…IGDE), and 176–209 (CTLD…DLQR). The Ca(2+) site is built by aspartate 79, aspartate 81, aspartate 83, and aspartate 90. Ca(2+)-binding residues include aspartate 152, aspartate 154, aspartate 156, glutamate 163, aspartate 189, aspartate 191, aspartate 193, and glutamate 200.

Its function is as follows. Potential calcium sensor. The chain is Probable calcium-binding protein CML36 (CML36) from Arabidopsis thaliana (Mouse-ear cress).